The sequence spans 93 residues: Small ribosomal subunit protein uS19 (93 aa).

This sequence belongs to the universal ribosomal protein uS19 family.

Functionally, protein S19 forms a complex with S13 that binds strongly to the 16S ribosomal RNA. The chain is Small ribosomal subunit protein uS19 from Geotalea daltonii (strain DSM 22248 / JCM 15807 / FRC-32) (Geobacter daltonii).